The primary structure comprises 446 residues: Transcriptional adapter 2-alpha (446 aa).

The segment at Phe-12–Pro-69 adopts a ZZ-type zinc-finger fold. Zn(2+) is bound by residues Cys-17, Cys-20, Cys-31, Cys-34, Cys-42, Cys-45, His-55, and His-59. In terms of domain architecture, SANT spans Val-70 to Pro-122. Residues Asp-345–Gly-375 are disordered. The 88-residue stretch at Asn-359–Ala-446 folds into the SWIRM domain. The DNA-binding element occupies Lys-429 to Ile-438.

It is found in the nucleus. It localises to the chromosome. Functionally, component of some complex with histone acetyltransferase activity. Required for the function of some acidic activation domains, which activate transcription from a distant site. Binds double-stranded DNA. Binds dinucleosomes, probably at the linker region between neighboring nucleosomes. Plays a role in chromatin remodeling. The polypeptide is Transcriptional adapter 2-alpha (TADA2A) (Gallus gallus (Chicken)).